A 636-amino-acid polypeptide reads, in one-letter code: Molybdenum cofactor biosynthesis protein 1 (636 aa).

The tract at residues 1-383 (MAARPAFGIV…QMKNRPMILI (383 aa)) is molybdenum cofactor biosynthesis protein A. Residues 19 to 40 (RGCSSGAPVTQPRPGEPSRPTR) are disordered. Position 64 is a phosphoserine (S64). Residues 64–279 (SFGRQHSYLR…TIRQRWPGLE (216 aa)) enclose the Radical SAM core domain. Position 73 (R73) interacts with GTP. [4Fe-4S] cluster is bound by residues C80 and C84. Y86 is a binding site for S-adenosyl-L-methionine. C87 contacts [4Fe-4S] cluster. R123 is a binding site for GTP. S-adenosyl-L-methionine is bound at residue G127. T154 lines the GTP pocket. S178 provides a ligand contact to S-adenosyl-L-methionine. An N6-acetyllysine modification is found at K198. K215 is a GTP binding site. M249 serves as a coordination point for S-adenosyl-L-methionine. Residues C312 and C315 each coordinate [4Fe-4S] cluster. Residue 317 to 319 (RLR) coordinates GTP. C329 contacts [4Fe-4S] cluster. Positions 414–636 (QCLSDQMASL…GGQRGDFHRA (223 aa)) are molybdenum cofactor biosynthesis protein C. The segment at 444–484 (SPQRHYSSYPDPDTHSKCLSTGSQAPDAPSGPGPTSNQLTH) is disordered. K528 bears the N6-acetyllysine mark. D606 acts as the For molybdenum cofactor biosynthesis protein C activity in catalysis.

It in the C-terminal section; belongs to the MoaC family. This sequence in the N-terminal section; belongs to the radical SAM superfamily. MoaA family. As to quaternary structure, isoform Mocs1a and isoform Mocs1b probably form a heterooligomer. It depends on [4Fe-4S] cluster as a cofactor.

The catalysed reaction is GTP + AH2 + S-adenosyl-L-methionine = (8S)-3',8-cyclo-7,8-dihydroguanosine 5'-triphosphate + 5'-deoxyadenosine + L-methionine + A + H(+). It carries out the reaction (8S)-3',8-cyclo-7,8-dihydroguanosine 5'-triphosphate = cyclic pyranopterin phosphate + diphosphate. The protein operates within cofactor biosynthesis; molybdopterin biosynthesis. Isoform Mocs1a and isoform Mocs1b probably form a complex that catalyzes the conversion of 5'-GTP to cyclic pyranopterin monophosphate (cPMP). Mocs1a catalyzes the cyclization of GTP to (8S)-3',8-cyclo-7,8-dihydroguanosine 5'-triphosphate and Mocs1b catalyzes the subsequent conversion of (8S)-3',8-cyclo-7,8-dihydroguanosine 5'-triphosphate to cPMP. This chain is Molybdenum cofactor biosynthesis protein 1 (Mocs1), found in Mus musculus (Mouse).